The sequence spans 195 residues: Keratin-associated protein 4-11 (195 aa).

Repeat copies occupy residues 5 to 9, 24 to 28, 29 to 33, 34 to 38, 44 to 48, 49 to 53, 54 to 58, 59 to 63, 64 to 68, 69 to 73, 74 to 78, 79 to 83, 84 to 88, 89 to 93, 94 to 98, 99 to 103, 104 to 108, 109 to 113, 114 to 118, 119 to 123, 124 to 128, 129 to 133, 134 to 138, 144 to 148, 149 to 153, 154 to 158, and 159 to 163. A 27 X 5 AA repeats of C-C-[GIKRQVHEL]-[SPTR]-[STVQRMC] region spans residues 5 to 163; it reads CCGSVCSHQG…CCRPCCCLRP (159 aa).

It belongs to the KRTAP type 4 family. Interacts with hair keratins. As to expression, expressed in the hair follicles.

In the hair cortex, hair keratin intermediate filaments are embedded in an interfilamentous matrix, consisting of hair keratin-associated proteins (KRTAP), which are essential for the formation of a rigid and resistant hair shaft through their extensive disulfide bond cross-linking with abundant cysteine residues of hair keratins. The matrix proteins include the high-sulfur and high-glycine-tyrosine keratins. This Homo sapiens (Human) protein is Keratin-associated protein 4-11 (KRTAP4-11).